The primary structure comprises 102 residues: NADH-quinone oxidoreductase subunit K (102 aa).

The next 3 helical transmembrane spans lie at 6 to 26 (LEHGLAVAGVLFCLGLVGLMV), 30 to 50 (ILFVLMSLEIMMNAAALAFVV), and 62 to 82 (VMFILVISLAAAEASIGLAIL).

Belongs to the complex I subunit 4L family. In terms of assembly, NDH-1 is composed of 13 different subunits. Subunits NuoA, H, J, K, L, M, N constitute the membrane sector of the complex.

It localises to the cell inner membrane. The enzyme catalyses a quinone + NADH + 5 H(+)(in) = a quinol + NAD(+) + 4 H(+)(out). In terms of biological role, NDH-1 shuttles electrons from NADH, via FMN and iron-sulfur (Fe-S) centers, to quinones in the respiratory chain. The immediate electron acceptor for the enzyme in this species is believed to be ubiquinone. Couples the redox reaction to proton translocation (for every two electrons transferred, four hydrogen ions are translocated across the cytoplasmic membrane), and thus conserves the redox energy in a proton gradient. This is NADH-quinone oxidoreductase subunit K from Pseudomonas syringae pv. tomato (strain ATCC BAA-871 / DC3000).